A 193-amino-acid chain; its full sequence is Potassium-transporting ATPase KdpC subunit (193 aa).

A helical transmembrane segment spans residues 7–27 (PLVVLFVVLTAVTGLAYPAVM).

The protein belongs to the KdpC family. In terms of assembly, the system is composed of three essential subunits: KdpA, KdpB and KdpC.

It is found in the cell inner membrane. Its function is as follows. Part of the high-affinity ATP-driven potassium transport (or Kdp) system, which catalyzes the hydrolysis of ATP coupled with the electrogenic transport of potassium into the cytoplasm. This subunit acts as a catalytic chaperone that increases the ATP-binding affinity of the ATP-hydrolyzing subunit KdpB by the formation of a transient KdpB/KdpC/ATP ternary complex. The protein is Potassium-transporting ATPase KdpC subunit of Burkholderia orbicola (strain MC0-3).